Here is a 194-residue protein sequence, read N- to C-terminus: [Ribosomal protein uS5]-alanine N-acetyltransferase (194 aa).

The N-acetyltransferase domain occupies 18–188; the sequence is LVVRLVHDRD…DHVLTALTTP (171 aa).

This sequence belongs to the acetyltransferase family. RimJ subfamily.

It is found in the cytoplasm. It carries out the reaction N-terminal L-alanyl-[ribosomal protein uS5] + acetyl-CoA = N-terminal N(alpha)-acetyl-L-alanyl-[ribosomal protein uS5] + CoA + H(+). In terms of biological role, acetylates the N-terminal alanine of ribosomal protein uS5. The sequence is that of [Ribosomal protein uS5]-alanine N-acetyltransferase (rimJ) from Shigella flexneri.